Consider the following 317-residue polypeptide: Proline-rich protein 2 (317 aa).

The N-terminal stretch at 1-16 (MLVVLFTVALLALSSA) is a signal peptide. Residues 15–317 (SAQGPREELQ…PPQGRPQGPQ (303 aa)) form a disordered region. A compositionally biased stretch (pro residues) spans 32–44 (QRPPPSGSQPRPP). An N-linked (GlcNAc...) asparagine glycan is attached at asparagine 46. 2 stretches are compositionally biased toward pro residues: residues 51–183 (GPPP…PPAG) and 204–288 (QSPP…PTQG). Low complexity predominate over residues 289 to 305 (PHPTGGPQQTPPLAGNP). Residues 306–317 (QGPPQGRPQGPQ) are compositionally biased toward pro residues.

It localises to the secreted. The sequence is that of Proline-rich protein 2 (Prp2) from Mus musculus (Mouse).